The sequence spans 300 residues: Protein p34 (300 aa).

The next 5 helical transmembrane spans lie at 14 to 34, 39 to 59, 87 to 107, 119 to 139, and 170 to 190; these read YLSV…WVVT, ILAS…NLVA, SIFF…SLFI, IIMY…TYVI, and LSDY…LYIF.

This sequence belongs to the cation diffusion facilitator (CDF) transporter (TC 2.A.4) family.

It localises to the cell membrane. The polypeptide is Protein p34 (p34) (Rickettsia prowazekii (strain Madrid E)).